The chain runs to 220 residues: Adenylate kinase (220 aa).

An ATP-binding site is contributed by 10–15; the sequence is GAGKGT. The segment at 30 to 59 is NMP; that stretch reads STGDMLRAAVKAGSPLGVEAKGYMDAGKLV. AMP contacts are provided by residues Thr31, Arg36, 57–59, 85–88, and Gln92; these read KLV and GFPR. Residues 122 to 159 are LID; the sequence is GRRTHAASGRTYHVKFNPPKVEGQDDVTGEPLIQRDDD. Residues Arg123 and 132–133 contribute to the ATP site; that span reads TY. 2 residues coordinate AMP: Arg156 and Arg167. Gly206 is an ATP binding site.

It belongs to the adenylate kinase family. Monomer.

It localises to the cytoplasm. It catalyses the reaction AMP + ATP = 2 ADP. Its pathway is purine metabolism; AMP biosynthesis via salvage pathway; AMP from ADP: step 1/1. In terms of biological role, catalyzes the reversible transfer of the terminal phosphate group between ATP and AMP. Plays an important role in cellular energy homeostasis and in adenine nucleotide metabolism. In Burkholderia vietnamiensis (strain G4 / LMG 22486) (Burkholderia cepacia (strain R1808)), this protein is Adenylate kinase.